The sequence spans 590 residues: Aspartate--tRNA ligase (590 aa).

Glutamate 180 is an L-aspartate binding site. The interval 204–207 is aspartate; sequence QLFK. Residue arginine 226 coordinates L-aspartate. Residues 226-228 and glutamine 235 contribute to the ATP site; that span reads RDE. L-aspartate is bound at residue histidine 454. Glutamate 488 lines the ATP pocket. Arginine 495 lines the L-aspartate pocket. Residue 540–543 coordinates ATP; it reads GFDR.

The protein belongs to the class-II aminoacyl-tRNA synthetase family. Type 1 subfamily. As to quaternary structure, homodimer.

Its subcellular location is the cytoplasm. It catalyses the reaction tRNA(Asp) + L-aspartate + ATP = L-aspartyl-tRNA(Asp) + AMP + diphosphate. Its function is as follows. Catalyzes the attachment of L-aspartate to tRNA(Asp) in a two-step reaction: L-aspartate is first activated by ATP to form Asp-AMP and then transferred to the acceptor end of tRNA(Asp). This chain is Aspartate--tRNA ligase, found in Clostridium kluyveri (strain NBRC 12016).